A 242-amino-acid polypeptide reads, in one-letter code: Polycomb group RING finger protein 3 (242 aa).

The segment at 17 to 56 adopts an RING-type zinc-finger fold; that stretch reads CRLCSGYLIDATTVTECLHTFCRSCLVKYLEENNTCPTCR. The interval 115–149 is disordered; it reads AKQHLDPHRNGETKADDSSNKEAAEEKQEEDGDYH. Over residues 117-140 the composition is skewed to basic and acidic residues; it reads QHLDPHRNGETKADDSSNKEAAEE. The interval 132-242 is interaction with BCORL1; sequence SSNKEAAEEK…LHYRPKMDLL (111 aa).

In terms of assembly, component of a PRC1-like complex that contains PCGF3, RNF2 and RYBP. Interacts with CBX6, CBX7 and CBX8. Interacts with BCORL1.

Its subcellular location is the nucleus. The protein resides in the nucleoplasm. In terms of biological role, component of a Polycomb group (PcG) multiprotein PRC1-like complex, a complex class required to maintain the transcriptionally repressive state of many genes, including Hox genes, throughout development. PcG PRC1 complex acts via chromatin remodeling and modification of histones; it mediates monoubiquitination of histone H2A 'Lys-119', rendering chromatin heritably changed in its expressibility. Within the PRC1-like complex, regulates RNF2 ubiquitin ligase activity. Plays a redundant role with PCGF5 as part of a PRC1-like complex that mediates monoubiquitination of histone H2A 'Lys-119' on the X chromosome and is required for normal silencing of one copy of the X chromosome in XX females. The chain is Polycomb group RING finger protein 3 (PCGF3) from Bos taurus (Bovine).